The primary structure comprises 561 residues: MNINVADLLNGNYILLLFVVLALGLCLGKLRLGSVQLGNSIGVLVVSLLLGQQHFSINTDALNLGFMLFIFCVGVEAGPNFFSIFFRDGKNYLMLALVMVGSALLIALGLGKLFGWDIGLTAGMLAGSMTSTPVLVGAGDTLRHSGIASTQLSSALDNLSLGYALTYLIGLVSLIVGARYLPKLQHQDLQTSAQQIARERGLDTDANRKVYLPVIRAYRVGPELVAWTDGKNLRELGIYRQTGCYIERIRRNGILANPDGDAVLQMGDEIALVGYPDAHARLDPSFRNGKEVFDRDLLDMRIVTEEIVVKNHNAVGRRLAQLKLTDHGCFLNRVIRSQIEMPIDDNVVLNKGDVLQVSGDARRVKTIADRIGFISIHSQVTDLLAFCAFFIIGLMIGMITFQFSNFSFGIGNAAGLLFAGIMLGFLRANHPTFGYIPQGALNMVKEFGLMVFMAGVGLSAGSGISNGLGAVGGQMLIAGLVVSLVPVVICFLFGAYVLRMNRALLFGAMMGARTCAPAMEIISDTARSNIPALGYAGTYAIANVLLTLAGTLIVIIWPGLG.

5 helical membrane passes run leucine 8–glycine 28, leucine 32–glutamine 52, phenylalanine 66–phenylalanine 86, methionine 94–phenylalanine 114, and asparagine 158–alanine 178. RCK C-terminal domains are found at residues arginine 200–asparagine 288 and valine 292–phenylalanine 373. The next 5 helical transmembrane spans lie at leucine 383 to phenylalanine 403, phenylalanine 406 to leucine 426, phenylalanine 447 to glycine 467, methionine 475 to alanine 495, and alanine 540 to leucine 560.

This sequence belongs to the AAE transporter (TC 2.A.81) family. YbjL subfamily.

Its subcellular location is the cell membrane. The protein is Putative transport protein YbjL of Salmonella agona (strain SL483).